A 415-amino-acid chain; its full sequence is Metal tolerance protein 5 (415 aa).

The Cytoplasmic portion of the chain corresponds to 1-124 (MAAAVAGGGE…REKVARSETL (124 aa)). Residues 125-145 (AIRLSNIANMVLFAAKVYASV) form a helical membrane-spanning segment. The Vacuolar segment spans residues 146 to 150 (RSGSL). Residues 151-171 (AIIASTLDSLLDLLSGFILWF) form a helical membrane-spanning segment. The Cytoplasmic segment spans residues 172 to 192 (TAFSMQTPNPYRYPIGKKRMQ). A helical transmembrane segment spans residues 193-213 (PLGILVFASVMATLGLQIILE). The Vacuolar segment spans residues 214–232 (SVRSLLSDGDEFSLTKEQE). The chain crosses the membrane as a helical span at residues 233–253 (KWVVDIMLAVTLVKLALVLYC). The Cytoplasmic segment spans residues 254-268 (RTFTNEIVKAYAQDH). Residues 269-291 (FFDVITNMIGLVAALLATYIEGW) traverse the membrane as a helical segment. Topologically, residues 292 to 293 (ID) are vacuolar. The helical transmembrane segment at 294–313 (PVGAIILAIYTIRTWSMTVL) threads the bilayer. Topologically, residues 314–415 (ENVHSLVGQS…RPEHALSHEK (102 aa)) are cytoplasmic.

This sequence belongs to the cation diffusion facilitator (CDF) transporter (TC 2.A.4) family. SLC30A subfamily.

Its subcellular location is the vacuole membrane. Functionally, involved in sequestration of excess metal in the cytoplasm into vacuoles to maintain metal homeostasis. The protein is Metal tolerance protein 5 (MTP5) of Oryza sativa subsp. japonica (Rice).